The primary structure comprises 279 residues: Four and a half LIM domains protein 2 (279 aa).

The C4-type zinc finger occupies 7–31; it reads CHHCNESLYGKKYILKEENPHCVAC. LIM zinc-binding domains are found at residues 40–92, 101–153, and 162–212; these read CEEC…CTDC, CQEC…CVPC, and CVQC…CLTC. Lys78 is covalently cross-linked (Glycyl lysine isopeptide (Lys-Gly) (interchain with G-Cter in SUMO2)). Residues Lys167 and Lys220 each participate in a glycyl lysine isopeptide (Lys-Gly) (interchain with G-Cter in SUMO2) cross-link. The LIM zinc-binding 4 domain occupies 221–275; it reads CAGCTNPISGLGGTKYISFEERQWHNDCFNCKKCSLSLVGRGFLTERDDILCPDC. The residue at position 238 (Ser238) is a Phosphoserine.

As to quaternary structure, interacts with ZNF638 and TTN/titin. Interacts with E4F1. Interacts with GRB7. Interacts with SIRT1 and FOXO1. Interacts with CEFIP. Interacts with calcineurin. Interacts with FOXK1. Highly expressed in heart but also detectable in brain and skeletal muscle.

The protein localises to the cytoplasm. Its subcellular location is the nucleus. The protein resides in the myofibril. It is found in the sarcomere. It localises to the z line. May function as a molecular transmitter linking various signaling pathways to transcriptional regulation. Negatively regulates the transcriptional repressor E4F1 and may function in cell growth. Inhibits the transcriptional activity of FOXO1 and its apoptotic function by enhancing the interaction of FOXO1 with SIRT1 and FOXO1 deacetylation. Negatively regulates the calcineurin/NFAT signaling pathway in cardiomyocytes. In Mus musculus (Mouse), this protein is Four and a half LIM domains protein 2 (Fhl2).